A 145-amino-acid chain; its full sequence is Deoxyuridine 5'-triphosphate nucleotidohydrolase (145 aa).

Substrate contacts are provided by residues 62 to 64 (RSG), asparagine 75, 79 to 81 (TVD), and lysine 89.

Belongs to the dUTPase family. Mg(2+) is required as a cofactor.

The catalysed reaction is dUTP + H2O = dUMP + diphosphate + H(+). The protein operates within pyrimidine metabolism; dUMP biosynthesis; dUMP from dCTP (dUTP route): step 2/2. This enzyme is involved in nucleotide metabolism: it produces dUMP, the immediate precursor of thymidine nucleotides and it decreases the intracellular concentration of dUTP so that uracil cannot be incorporated into DNA. The chain is Deoxyuridine 5'-triphosphate nucleotidohydrolase from Helicobacter pylori (strain J99 / ATCC 700824) (Campylobacter pylori J99).